A 297-amino-acid chain; its full sequence is Transcription factor PCF8 (297 aa).

Residues 1–22 are disordered; the sequence is MEEVVGGGKERKRPRGALVGVG. One can recognise a TCP domain in the interval 46 to 104; that stretch reads GKDRHSKVVTSRGLRDRRVRLSVPTAIAFYDIQDRLGVDQPSKAIEWLIRAAAAAIDAL. Disordered regions lie at residues 116-136 and 273-297; these read AASS…SETS and AAPA…ERKT. Over residues 282 to 297 the composition is skewed to basic and acidic residues; sequence GERRLQLWDFKEERKT.

Forms homodimers and heterodimers.

It is found in the nucleus. Functionally, transcription activator. Binds the promoter core sequence 5'-GGNCC-3'. This is Transcription factor PCF8 (PCF8) from Oryza sativa subsp. indica (Rice).